A 706-amino-acid polypeptide reads, in one-letter code: MNSLFASTARGLEELLKSELEALGAHDCKIVQGGVHFQGDDRLMYQSLLWSRLASRILLPLNEFKVYSDLDLYLGVQAIDWPSIFGVDKTFAVHFSGVNDEIRNSQYGALKVKDAIVDSFTRKMDQRPTVAKQQPDIRVNVFLQRDMASVALDLSGEGLHQRGYRDLTGQAPLKENLAAAIIQRSGWQPGTPMVDPMCGSGTLLIEAAMMASDRAPGLHRGHWGFTAWNAFNEALWRELTTEAQVRARRGLLETSSRFFGSDIDRRVIEMARANARRAGVAELITFNANDISKLVNPLPEGPVGTVISNPPYGERLESEPALIALHNMFGRMMKTAFGGWRLSLFSASPELLSCLQLRADREFKAKNGPLDCVQKNYQLTANPLGAGGALVAEDYANRLRKNVKKLDKWAKQQGIECYRLYDADLPDYNVAVDRYGSKVVVQEYAPPKTIDPQKARQRLFDVINATLAVLELPSNQLVLKTRERQKGKNQYEKLAQKGEFLLVSEYNAKLWVNLTDYLDTGLFLDHRIARQMLGKMSQGKDFLNLFAYTGTASVHAGLGGARSTTTVDMSRTYLEWAEKNLRVNGLTGQQHRLIQADCLSWLSNTDEQFDVIFIDPPTFSNSKRMETTFDVQRDHLVLMKELKRLLRRKGTIMFSNNKRGFQMDLAGIAALGLEAKEITALTQSEDFARNRQIHNCWLVTHSQEEK.

The region spanning 43-154 (LMYQSLLWSR…RDMASVALDL (112 aa)) is the THUMP domain.

It belongs to the methyltransferase superfamily. RlmKL family.

The protein localises to the cytoplasm. It carries out the reaction guanosine(2445) in 23S rRNA + S-adenosyl-L-methionine = N(2)-methylguanosine(2445) in 23S rRNA + S-adenosyl-L-homocysteine + H(+). It catalyses the reaction guanosine(2069) in 23S rRNA + S-adenosyl-L-methionine = N(2)-methylguanosine(2069) in 23S rRNA + S-adenosyl-L-homocysteine + H(+). Functionally, specifically methylates the guanine in position 2445 (m2G2445) and the guanine in position 2069 (m7G2069) of 23S rRNA. The sequence is that of Ribosomal RNA large subunit methyltransferase K/L from Yersinia pestis bv. Antiqua (strain Antiqua).